The chain runs to 104 residues: Large ribosomal subunit protein uL24 (104 aa).

The protein belongs to the universal ribosomal protein uL24 family. In terms of assembly, part of the 50S ribosomal subunit.

Functionally, one of two assembly initiator proteins, it binds directly to the 5'-end of the 23S rRNA, where it nucleates assembly of the 50S subunit. One of the proteins that surrounds the polypeptide exit tunnel on the outside of the subunit. The chain is Large ribosomal subunit protein uL24 from Enterobacter sp. (strain 638).